We begin with the raw amino-acid sequence, 653 residues long: Mannosyl-oligosaccharide 1,2-alpha-mannosidase IA (653 aa).

At 1 to 41 (MPVGGLLPLFSSPAGGVLGGGLGGGGGRKGSGPAALRLTEK) the chain is on the cytoplasmic side. A helical; Signal-anchor for type II membrane protein membrane pass occupies residues 42-62 (FVLLLVFSAFITLCFGAIFFL). At 63 to 653 (PDSSKLLSGV…DKKEVEIREE (591 aa)) the chain is on the lumenal side. Positions 81–116 (QPAADHKPGPGARAEDAAEGRARRREEGAPGDPEAA) are disordered. Residues 84–108 (ADHKPGPGARAEDAAEGRARRREEG) show a composition bias toward basic and acidic residues. Cysteines 476 and 508 form a disulfide. Asn513 carries an N-linked (GlcNAc...) asparagine glycan. Glu522 functions as the Proton donor in the catalytic mechanism.

It belongs to the glycosyl hydrolase 47 family. The cofactor is Ca(2+).

It localises to the golgi apparatus membrane. The catalysed reaction is N(4)-(alpha-D-Man-(1-&gt;2)-alpha-D-Man-(1-&gt;2)-alpha-D-Man-(1-&gt;3)-[alpha-D-Man-(1-&gt;2)-alpha-D-Man-(1-&gt;3)-[alpha-D-Man-(1-&gt;2)-alpha-D-Man-(1-&gt;6)]-alpha-D-Man-(1-&gt;6)]-beta-D-Man-(1-&gt;4)-beta-D-GlcNAc-(1-&gt;4)-beta-D-GlcNAc)-L-asparaginyl-[protein] (N-glucan mannose isomer 9A1,2,3B1,2,3) + 4 H2O = N(4)-(alpha-D-Man-(1-&gt;3)-[alpha-D-Man-(1-&gt;3)-[alpha-D-Man-(1-&gt;6)]-alpha-D-Man-(1-&gt;6)]-beta-D-Man-(1-&gt;4)-beta-D-GlcNAc-(1-&gt;4)-beta-D-GlcNAc)-L-asparaginyl-[protein] (N-glucan mannose isomer 5A1,2) + 4 beta-D-mannose. It catalyses the reaction N(4)-(alpha-D-Man-(1-&gt;2)-alpha-D-Man-(1-&gt;2)-alpha-D-Man-(1-&gt;3)-[alpha-D-Man-(1-&gt;3)-[alpha-D-Man-(1-&gt;2)-alpha-D-Man-(1-&gt;6)]-alpha-D-Man-(1-&gt;6)]-beta-D-Man-(1-&gt;4)-beta-D-GlcNAc-(1-&gt;4)-beta-D-GlcNAc)-L-asparaginyl-[protein] (N-glucan mannose isomer 8A1,2,3B1,3) + 3 H2O = N(4)-(alpha-D-Man-(1-&gt;3)-[alpha-D-Man-(1-&gt;3)-[alpha-D-Man-(1-&gt;6)]-alpha-D-Man-(1-&gt;6)]-beta-D-Man-(1-&gt;4)-beta-D-GlcNAc-(1-&gt;4)-beta-D-GlcNAc)-L-asparaginyl-[protein] (N-glucan mannose isomer 5A1,2) + 3 beta-D-mannose. It participates in protein modification; protein glycosylation. Inhibited by both 1-deoxymannojirimycin and kifunensine. Functionally, involved in the maturation of Asn-linked oligosaccharides. Progressively trim alpha-1,2-linked mannose residues from Man(9)GlcNAc(2) to produce Man(5)GlcNAc(2). This Homo sapiens (Human) protein is Mannosyl-oligosaccharide 1,2-alpha-mannosidase IA (MAN1A1).